Consider the following 168-residue polypeptide: Small ribosomal subunit protein uS5 (168 aa).

Residues 13 to 76 (IQEKLVAVRR…ENARRNMISV (64 aa)) form the S5 DRBM domain.

The protein belongs to the universal ribosomal protein uS5 family. Part of the 30S ribosomal subunit. Contacts proteins S4 and S8.

Functionally, with S4 and S12 plays an important role in translational accuracy. Its function is as follows. Located at the back of the 30S subunit body where it stabilizes the conformation of the head with respect to the body. The protein is Small ribosomal subunit protein uS5 of Coxiella burnetii (strain RSA 493 / Nine Mile phase I).